The primary structure comprises 173 residues: Shikimate kinase (173 aa).

11-16 (GAGKTT) lines the ATP pocket. Mg(2+) is bound at residue Thr15. 3 residues coordinate substrate: Asp33, Arg57, and Gly79. Arg118 contacts ATP. Arg140 serves as a coordination point for substrate.

It belongs to the shikimate kinase family. In terms of assembly, monomer. Mg(2+) serves as cofactor.

The protein localises to the cytoplasm. The enzyme catalyses shikimate + ATP = 3-phosphoshikimate + ADP + H(+). The protein operates within metabolic intermediate biosynthesis; chorismate biosynthesis; chorismate from D-erythrose 4-phosphate and phosphoenolpyruvate: step 5/7. In terms of biological role, catalyzes the specific phosphorylation of the 3-hydroxyl group of shikimic acid using ATP as a cosubstrate. In Parabacteroides distasonis (strain ATCC 8503 / DSM 20701 / CIP 104284 / JCM 5825 / NCTC 11152), this protein is Shikimate kinase.